We begin with the raw amino-acid sequence, 669 residues long: MTTPDRLLQLRQQLQKASYAYYVLDAPVMEDSVYDQLYRELQRLEAENPELITPDSPTQRVGEQPASQFRSVAHNIPLYSLENAFNVQELQQWQERWQRIAPTIEKAEYVCELKIDGSAIALTYENGLLVRGVTRGDGTTGEEISQNIKTIRSIPVKLNLDNPPPTVEVRGEAFLPLEEFNRINHEREAQGESLFANPRNAAAGTLRQLDPKIVHQRRLQFFAYTLHLPGQEDKIQSQWQALEYLKKAGFMVNPHCQLCKGLDEVVAYFEDWEGARQRLPYMTDGVVVKINQYPLQRELGFTQKFPRWAIALKYPAEETPTVVKAIEVNVGRTGAVTPLAVMEPVQLAGTTVQRATLHNQDRIQELDIRVGDTVIIRKAGEIIPEVVRVMTELRPENTTPYIFPSHCPACGSPLVRPLEEAVIRCVNSSCSAILQGSLIHWASRNALDIQGLGEKVVITLLENRLVNSVADLYGLQVEQLLGLERFAQKSAEKLIAAIEVSKSQPWSRILFGLGIRHVGQVNAKLLSQQFPTVEKLSQASIPDLEGVYGIGPEIAEAVVNWFRNPGNQQLIQDLEELGLVLANQGIDQTKTDSGKLKGKTFVLTGTLPNLSRLEAQELIEQSGGKVTSSVSTKTDYVLLGDKPGSKAAKAESLGIKLLSEAEFLQLLEP.

Residues 31–35 (DSVYD), 80–81 (SL), and Glu112 each bind NAD(+). Lys114 (N6-AMP-lysine intermediate) is an active-site residue. Positions 135, 172, 289, and 313 each coordinate NAD(+). Zn(2+)-binding residues include Cys407, Cys410, Cys425, and Cys430. Residues 591-669 (TDSGKLKGKT…EAEFLQLLEP (79 aa)) form the BRCT domain.

This sequence belongs to the NAD-dependent DNA ligase family. LigA subfamily. It depends on Mg(2+) as a cofactor. Mn(2+) is required as a cofactor.

It carries out the reaction NAD(+) + (deoxyribonucleotide)n-3'-hydroxyl + 5'-phospho-(deoxyribonucleotide)m = (deoxyribonucleotide)n+m + AMP + beta-nicotinamide D-nucleotide.. Its function is as follows. DNA ligase that catalyzes the formation of phosphodiester linkages between 5'-phosphoryl and 3'-hydroxyl groups in double-stranded DNA using NAD as a coenzyme and as the energy source for the reaction. It is essential for DNA replication and repair of damaged DNA. In Synechocystis sp. (strain ATCC 27184 / PCC 6803 / Kazusa), this protein is DNA ligase.